Reading from the N-terminus, the 195-residue chain is ATP-dependent Clp protease proteolytic subunit (195 aa).

The active-site Nucleophile is Ser99. The active site involves His124.

It belongs to the peptidase S14 family. Fourteen ClpP subunits assemble into 2 heptameric rings which stack back to back to give a disk-like structure with a central cavity, resembling the structure of eukaryotic proteasomes.

Its subcellular location is the cytoplasm. The enzyme catalyses Hydrolysis of proteins to small peptides in the presence of ATP and magnesium. alpha-casein is the usual test substrate. In the absence of ATP, only oligopeptides shorter than five residues are hydrolyzed (such as succinyl-Leu-Tyr-|-NHMec, and Leu-Tyr-Leu-|-Tyr-Trp, in which cleavage of the -Tyr-|-Leu- and -Tyr-|-Trp bonds also occurs).. Cleaves peptides in various proteins in a process that requires ATP hydrolysis. Has a chymotrypsin-like activity. Plays a major role in the degradation of misfolded proteins. The sequence is that of ATP-dependent Clp protease proteolytic subunit from Carboxydothermus hydrogenoformans (strain ATCC BAA-161 / DSM 6008 / Z-2901).